Consider the following 164-residue polypeptide: MALRLWASSAANALKISCSGATRAAPAYSISRYFSTVLDGLKYSSSHEWVKNDGSVATIGITDHAQGHLGEVVFVELPEAGAKVSQGGAFGNVESVKATSDINSPISGEVVEVNDKLSETPGLINSSPYEDGWMIKVKPSSPSELDALLDPAKYTKHCEEEDAH.

The N-terminal 34 residues, 1–34 (MALRLWASSAANALKISCSGATRAAPAYSISRYF), are a transit peptide targeting the mitochondrion. The Lipoyl-binding domain maps to 56–138 (VATIGITDHA…YEDGWMIKVK (83 aa)). K97 carries the N6-lipoyllysine modification.

It belongs to the GcvH family. In terms of assembly, the glycine cleavage system is composed of four proteins: P, T, L and H. It depends on (R)-lipoate as a cofactor.

The protein resides in the mitochondrion. Its function is as follows. The glycine cleavage system catalyzes the degradation of glycine. The H protein shuttles the methylamine group of glycine from the P protein to the T protein. The chain is Glycine cleavage system H protein, mitochondrial (GDCSH) from Oryza sativa subsp. indica (Rice).